A 98-amino-acid chain; its full sequence is Omega-hexatoxin-Hr2b (98 aa).

An N-terminal signal peptide occupies residues 1–22 (MKFSKLSLTLALILTQVLFVLC). Residues 24–56 (KINEDFMKHGLESQALHDEIRKPIDSENPDTER) constitute a propeptide that is removed on maturation. 3 disulfides stabilise this stretch: cysteine 60–cysteine 74, cysteine 67–cysteine 80, and cysteine 73–cysteine 85. Residue leucine 97 is modified to Leucine amide.

It belongs to the neurotoxin 15 family. 02 (omega-actx) subfamily. Expressed by the venom gland.

It localises to the secreted. Functionally, potent inhibitor of insect, but not mammalian, voltage-gated calcium channels (Cav). The chain is Omega-hexatoxin-Hr2b from Atrax robustus (Sydney funnel-web spider).